The chain runs to 373 residues: Cobalt-precorrin-5B C(1)-methyltransferase (373 aa).

It belongs to the CbiD family.

It catalyses the reaction Co-precorrin-5B + S-adenosyl-L-methionine = Co-precorrin-6A + S-adenosyl-L-homocysteine. It functions in the pathway cofactor biosynthesis; adenosylcobalamin biosynthesis; cob(II)yrinate a,c-diamide from sirohydrochlorin (anaerobic route): step 6/10. Catalyzes the methylation of C-1 in cobalt-precorrin-5B to form cobalt-precorrin-6A. This is Cobalt-precorrin-5B C(1)-methyltransferase from Listeria welshimeri serovar 6b (strain ATCC 35897 / DSM 20650 / CCUG 15529 / CIP 8149 / NCTC 11857 / SLCC 5334 / V8).